Consider the following 129-residue polypeptide: MSFEYPQDFRYLDSHEYVRIDGEIATIGITEFAVHELGDIVFLELPEIGDALTRGENFGTIESVKAVEELNSPVTGTVIERNEALINSPEEVSEDPYGEGWFLKVRVNDPGEIEDALTADEYRAQVEGE.

One can recognise a Lipoyl-binding domain in the interval 24–106 (IATIGITEFA…YGEGWFLKVR (83 aa)). Lys-65 is subject to N6-lipoyllysine.

Belongs to the GcvH family. As to quaternary structure, the glycine cleavage system is composed of four proteins: P, T, L and H. (R)-lipoate serves as cofactor.

In terms of biological role, the glycine cleavage system catalyzes the degradation of glycine. The H protein shuttles the methylamine group of glycine from the P protein to the T protein. The chain is Glycine cleavage system H protein from Nostoc punctiforme (strain ATCC 29133 / PCC 73102).